The following is a 365-amino-acid chain: Cobalt-precorrin-5B C(1)-methyltransferase (365 aa).

This sequence belongs to the CbiD family.

The enzyme catalyses Co-precorrin-5B + S-adenosyl-L-methionine = Co-precorrin-6A + S-adenosyl-L-homocysteine. It participates in cofactor biosynthesis; adenosylcobalamin biosynthesis; cob(II)yrinate a,c-diamide from sirohydrochlorin (anaerobic route): step 6/10. Its function is as follows. Catalyzes the methylation of C-1 in cobalt-precorrin-5B to form cobalt-precorrin-6A. In Pseudomonas fluorescens (strain ATCC BAA-477 / NRRL B-23932 / Pf-5), this protein is Cobalt-precorrin-5B C(1)-methyltransferase.